We begin with the raw amino-acid sequence, 270 residues long: Cystinosin homolog (270 aa).

The PQ-loop 1 domain maps to 9-75 (LEISYEIVGW…LYFSPVIQKQ (67 aa)). The chain crosses the membrane as a helical span at residues 14–34 (EIVGWIAFASWSISFYPQLIL). Asn-52 carries N-linked (GlcNAc...) asparagine glycosylation. 3 helical membrane passes run 93-113 (VAFS…IFIY), 123-143 (LAIG…FIAL), and 148-168 (WLWL…VKYI). One can recognise a PQ-loop 2 domain in the interval 151-213 (LISIFNSIQV…IQSIDQNSWK (63 aa)). N-linked (GlcNAc...) asparagine glycosylation is present at Asn-174. A run of 2 helical transmembrane segments spans residues 180–200 (TVGW…ANYL) and 223–243 (LLSL…YVLY). The tract at residues 250-270 (KSPETGEESNEPLIDSSHEHV) is disordered.

Belongs to the cystinosin (TC 2.A.43.1) family.

The protein resides in the lysosome membrane. Thought to transport cystine out of lysosomes. The chain is Cystinosin homolog from Arabidopsis thaliana (Mouse-ear cress).